The primary structure comprises 260 residues: Carbonic anhydrase 2 (260 aa).

The region spanning 3–259 (HGWGYADHNG…LKDRKVCASF (257 aa)) is the Alpha-carbonic anhydrase domain. Catalysis depends on His64, which acts as the Proton donor/acceptor. Positions 94, 96, and 119 each coordinate Zn(2+). 198-199 (TT) is a binding site for substrate.

The protein belongs to the alpha-carbonic anhydrase family. Requires Zn(2+) as cofactor.

It localises to the cytoplasm. The catalysed reaction is hydrogencarbonate + H(+) = CO2 + H2O. Functionally, catalyzes the reversible hydration of carbon dioxide. The protein is Carbonic anhydrase 2 (ca2) of Pseudaspius hakonensis (Big-scaled redfin).